We begin with the raw amino-acid sequence, 278 residues long: Large ribosomal subunit protein uL2 (278 aa).

Positions 212–278 (NRHRGIRPQT…IISRKKHKKG (67 aa)) are disordered. Positions 257 to 278 (YKTRKKKASDKLIISRKKHKKG) are enriched in basic residues.

Belongs to the universal ribosomal protein uL2 family. In terms of assembly, part of the 50S ribosomal subunit. Forms a bridge to the 30S subunit in the 70S ribosome.

In terms of biological role, one of the primary rRNA binding proteins. Required for association of the 30S and 50S subunits to form the 70S ribosome, for tRNA binding and peptide bond formation. It has been suggested to have peptidyltransferase activity; this is somewhat controversial. Makes several contacts with the 16S rRNA in the 70S ribosome. This Helicobacter pylori (strain Shi470) protein is Large ribosomal subunit protein uL2.